Consider the following 214-residue polypeptide: Orotate phosphoribosyltransferase (214 aa).

K26 contributes to the 5-phospho-alpha-D-ribose 1-diphosphate binding site. 34–35 (FF) lines the orotate pocket. Residues 72 to 73 (YK), R99, K100, K103, H105, and 124 to 132 (DDVITAGTA) contribute to the 5-phospho-alpha-D-ribose 1-diphosphate site. Residues T128 and R157 each coordinate orotate.

It belongs to the purine/pyrimidine phosphoribosyltransferase family. PyrE subfamily. As to quaternary structure, homodimer. Requires Mg(2+) as cofactor.

It carries out the reaction orotidine 5'-phosphate + diphosphate = orotate + 5-phospho-alpha-D-ribose 1-diphosphate. It participates in pyrimidine metabolism; UMP biosynthesis via de novo pathway; UMP from orotate: step 1/2. Functionally, catalyzes the transfer of a ribosyl phosphate group from 5-phosphoribose 1-diphosphate to orotate, leading to the formation of orotidine monophosphate (OMP). This is Orotate phosphoribosyltransferase from Pseudomonas fluorescens (strain SBW25).